The primary structure comprises 181 residues: Photosystem I assembly protein Ycf4 (181 aa).

A run of 2 helical transmembrane segments spans residues 19–39 (YFWA…GISS) and 62–82 (VMMF…LTII).

The protein belongs to the Ycf4 family.

The protein resides in the plastid. The protein localises to the chloroplast thylakoid membrane. Its function is as follows. Seems to be required for the assembly of the photosystem I complex. The protein is Photosystem I assembly protein Ycf4 of Phaeodactylum tricornutum (strain CCAP 1055/1).